Consider the following 122-residue polypeptide: Conotoxin flf14.2 (122 aa).

Positions 1–22 (MGFRVLVLIVMVTTSALPFTFS) are cleaved as a signal peptide. Positions 23–96 (EESGRSPFRP…AESPVGQKRW (74 aa)) are excised as a propeptide. Positions 53 to 91 (RADGQPSDMRQPEMRRPEMRRPEVRRPEVRQPEFAESPV) are disordered. The segment covering 62–85 (RQPEMRRPEMRRPEVRRPEVRQPE) has biased composition (basic and acidic residues). 2 cysteine pairs are disulfide-bonded: Cys-101-Cys-121 and Cys-105-Cys-117.

Belongs to the conotoxin R superfamily. As to expression, expressed by the venom duct.

The protein resides in the secreted. The polypeptide is Conotoxin flf14.2 (Conus anabathrum floridanus (Florida cone)).